The primary structure comprises 1222 residues: A disintegrin and metalloproteinase with thrombospondin motifs 16 (1222 aa).

The first 20 residues, 1 to 20, serve as a signal peptide directing secretion; the sequence is MESRGCAALWVLLLAQVSEQ. The propeptide occupies 21–277; sequence QTPACALGLA…EYKPSSRHKR (257 aa). Asparagine 154 and asparagine 190 each carry an N-linked (GlcNAc...) asparagine glycan. The Cysteine switch motif lies at 245–253; sequence HFCGRRKKY. Cysteine 247 contributes to the Zn(2+) binding site. Positions 288–493 constitute a Peptidase M12B domain; it reads LNVETLVVVD…AQAICLADQP (206 aa). Residue asparagine 308 is glycosylated (N-linked (GlcNAc...) asparagine). 11 disulfides stabilise this stretch: cysteine 364–cysteine 415, cysteine 390–cysteine 397, cysteine 409–cysteine 488, cysteine 448–cysteine 472, cysteine 516–cysteine 541, cysteine 527–cysteine 548, cysteine 536–cysteine 567, cysteine 561–cysteine 572, cysteine 596–cysteine 633, cysteine 600–cysteine 638, and cysteine 611–cysteine 623. Position 431 (histidine 431) interacts with Zn(2+). Residue glutamate 432 is part of the active site. Positions 435 and 441 each coordinate Zn(2+). Residues 494–583 enclose the Disintegrin domain; that stretch reads KPVKEYKYPE…KYGDEGPKPT (90 aa). Residues 584–639 enclose the TSP type-1 1 domain; that stretch reads HGHWSDWSPWSPCSRTCGGGISHRDRLCTNPRPSHGGKFCQGSTRTLKLCNSQRCP. N-linked (GlcNAc...) asparagine glycosylation is found at asparagine 739, asparagine 778, asparagine 825, asparagine 833, asparagine 903, and asparagine 933. The spacer stretch occupies residues 745 to 871; the sequence is THRGLYSKHH…KTPAAQPSYS (127 aa). 5 consecutive TSP type-1 domains span residues 872–920, 925–985, 986–1046, 1049–1113, and 1125–1179; these read WAIV…LVPC, CPSS…QSCP, PAWS…KRCH, KKLQ…IPCP, and RGSW…HFCP. Positions 1184–1221 constitute a PLAC domain; it reads RGTFCKDLFHWCYLVPQHGMCGHRFYSKQCCNTCSKSN.

It depends on Zn(2+) as a cofactor. Post-translationally, the precursor is cleaved by a furin endopeptidase. In terms of processing, glycosylated. Can be O-fucosylated by POFUT2 on a serine or a threonine residue found within the consensus sequence C1-X(2)-(S/T)-C2-G of the TSP type-1 repeat domains where C1 and C2 are the first and second cysteine residue of the repeat, respectively. Fucosylated repeats can then be further glycosylated by the addition of a beta-1,3-glucose residue by the glucosyltransferase, B3GALTL. Fucosylation mediates the efficient secretion of ADAMTS family members. Can also be C-glycosylated with one or two mannose molecules on tryptophan residues within the consensus sequence W-X-X-W of the TPRs, and N-glycosylated. These other glycosylations can also facilitate secretion.

It localises to the secreted. It is found in the extracellular space. Its subcellular location is the extracellular matrix. This Mus musculus (Mouse) protein is A disintegrin and metalloproteinase with thrombospondin motifs 16 (Adamts16).